Reading from the N-terminus, the 328-residue chain is Carbonic anhydrase-related protein 11 (328 aa).

The N-terminal stretch at 1-23 (MGGAARLSAPQALVLWAALGAAA) is a signal peptide. Positions 33 to 303 (DWWSYKENLQ…LAHRALRGNR (271 aa)) constitute an Alpha-carbonic anhydrase domain. An N-linked (GlcNAc...) asparagine glycan is attached at Asn118. The interval 300-328 (RGNRDPRHPERRCRGPNYRLHVDGGPHGR) is disordered. The span at 319 to 328 (LHVDGGPHGR) shows a compositional bias: basic and acidic residues.

Belongs to the alpha-carbonic anhydrase family.

It is found in the secreted. Functionally, does not have a catalytic activity. This Mus musculus (Mouse) protein is Carbonic anhydrase-related protein 11 (Ca11).